We begin with the raw amino-acid sequence, 529 residues long: Peptide chain release factor 3 (529 aa).

A tr-type G domain is found at 11–280; that stretch reads AKRRTFAIIS…GLVEWAPAPM (270 aa). GTP contacts are provided by residues 20–27, 88–92, and 142–145; these read SHPDAGKT, DTPGH, and NKLD.

The protein belongs to the TRAFAC class translation factor GTPase superfamily. Classic translation factor GTPase family. PrfC subfamily.

It localises to the cytoplasm. In terms of biological role, increases the formation of ribosomal termination complexes and stimulates activities of RF-1 and RF-2. It binds guanine nucleotides and has strong preference for UGA stop codons. It may interact directly with the ribosome. The stimulation of RF-1 and RF-2 is significantly reduced by GTP and GDP, but not by GMP. This chain is Peptide chain release factor 3, found in Klebsiella pneumoniae subsp. pneumoniae (strain ATCC 700721 / MGH 78578).